The chain runs to 358 residues: ATP-dependent (S)-NAD(P)H-hydrate dehydratase (358 aa).

In terms of domain architecture, YjeF C-terminal spans 63–354 (LLQSAKNVIP…QQIHQAFEEL (292 aa)). (6S)-NADPHX-binding positions include G163 and 220–226 (NVVEFDR). ATP contacts are provided by residues 261–265 (KGQHD) and 280–289 (GSNRRCGGQG). D290 is a (6S)-NADPHX binding site.

It belongs to the NnrD/CARKD family. It depends on Mg(2+) as a cofactor.

The catalysed reaction is (6S)-NADHX + ATP = ADP + phosphate + NADH + H(+). It catalyses the reaction (6S)-NADPHX + ATP = ADP + phosphate + NADPH + H(+). Catalyzes the dehydration of the S-form of NAD(P)HX at the expense of ATP, which is converted to ADP. Together with NAD(P)HX epimerase, which catalyzes the epimerization of the S- and R-forms, the enzyme allows the repair of both epimers of NAD(P)HX, a damaged form of NAD(P)H that is a result of enzymatic or heat-dependent hydration. The sequence is that of ATP-dependent (S)-NAD(P)H-hydrate dehydratase from Nematostella vectensis (Starlet sea anemone).